Reading from the N-terminus, the 156-residue chain is MSRKKTQPKKVVTPDPIFNSTIIPKLINSIMYDGKKVVAEKIVYEAIEKIKSKTKEEPINVFNEAINNIKPTVEVRSRRVGGATYQVPVEVKTKRAQALAIRWLVDASRKRKDKHMSDKIFNELYDAYEKKGSAVKKREDVHKMAESNKAFAHFRW.

It belongs to the universal ribosomal protein uS7 family. As to quaternary structure, part of the 30S ribosomal subunit. Contacts proteins S9 and S11.

One of the primary rRNA binding proteins, it binds directly to 16S rRNA where it nucleates assembly of the head domain of the 30S subunit. Is located at the subunit interface close to the decoding center, probably blocks exit of the E-site tRNA. The sequence is that of Small ribosomal subunit protein uS7 from Pelagibacter ubique (strain HTCC1062).